A 143-amino-acid polypeptide reads, in one-letter code: Antiholin-like protein LrgA (143 aa).

4 helical membrane passes run 6 to 26, 30 to 50, 61 to 81, and 97 to 117; these read VYSFLSQAFIFSAIMLISNII, LPIPMPSSVIGLVILFSLLCL, LGTALTGIIGFLFVPSGISVI, and VIVVATVILLAVTGLFAQFIL.

The protein belongs to the CidA/LrgA family. LrgA subfamily.

It localises to the cell membrane. In terms of biological role, inhibits the expression or activity of extracellular murein hydrolases by interacting, possibly with LrgB, with the holin-like protein CidA. The LrgAB and CidA proteins may affect the proton motive force of the membrane. May be involved in programmed cell death (PCD), possibly triggering PCD in response to antibiotics and environmental stresses. This is Antiholin-like protein LrgA from Bacillus cereus (strain AH820).